The sequence spans 149 residues: 17 kDa major membrane protein (149 aa).

The first 19 residues, 1-19 (MKKIIKLSLLSLSIAGLAS), serve as a signal peptide directing secretion. Cys-20 carries N-palmitoyl cysteine lipidation. The S-diacylglycerol cysteine moiety is linked to residue Cys-20.

Its subcellular location is the cell outer membrane. This is 17 kDa major membrane protein from Francisella tularensis subsp. holarctica (strain LVS).